We begin with the raw amino-acid sequence, 334 residues long: DNA-directed RNA polymerase subunit alpha (334 aa).

The tract at residues 1–234 (MQRSVHELLT…QQLAVFVDFD (234 aa)) is alpha N-terminal domain (alpha-NTD). The segment at 248–334 (IDPILLRPVD…LRGDDRVLGG (87 aa)) is alpha C-terminal domain (alpha-CTD).

It belongs to the RNA polymerase alpha chain family. Homodimer. The RNAP catalytic core consists of 2 alpha, 1 beta, 1 beta' and 1 omega subunit. When a sigma factor is associated with the core the holoenzyme is formed, which can initiate transcription.

The enzyme catalyses RNA(n) + a ribonucleoside 5'-triphosphate = RNA(n+1) + diphosphate. Its function is as follows. DNA-dependent RNA polymerase catalyzes the transcription of DNA into RNA using the four ribonucleoside triphosphates as substrates. The polypeptide is DNA-directed RNA polymerase subunit alpha (Marinobacter nauticus (strain ATCC 700491 / DSM 11845 / VT8) (Marinobacter aquaeolei)).